Reading from the N-terminus, the 122-residue chain is Ribonuclease P protein component (122 aa).

This sequence belongs to the RnpA family. Consists of a catalytic RNA component (M1 or rnpB) and a protein subunit.

The catalysed reaction is Endonucleolytic cleavage of RNA, removing 5'-extranucleotides from tRNA precursor.. Its function is as follows. RNaseP catalyzes the removal of the 5'-leader sequence from pre-tRNA to produce the mature 5'-terminus. It can also cleave other RNA substrates such as 4.5S RNA. The protein component plays an auxiliary but essential role in vivo by binding to the 5'-leader sequence and broadening the substrate specificity of the ribozyme. In Oenococcus oeni (strain ATCC BAA-331 / PSU-1), this protein is Ribonuclease P protein component.